The chain runs to 187 residues: Large ribosomal subunit protein mL49 (187 aa).

This sequence belongs to the mitochondrion-specific ribosomal protein mL49 family.

Its subcellular location is the mitochondrion. The chain is Large ribosomal subunit protein mL49 (mrpl-49) from Caenorhabditis elegans.